We begin with the raw amino-acid sequence, 417 residues long: Cell division protein FtsA (417 aa).

Belongs to the FtsA/MreB family. As to quaternary structure, self-interacts. Interacts with FtsZ.

Its subcellular location is the cell inner membrane. Functionally, cell division protein that is involved in the assembly of the Z ring. May serve as a membrane anchor for the Z ring. This chain is Cell division protein FtsA, found in Pseudomonas aeruginosa (strain ATCC 15692 / DSM 22644 / CIP 104116 / JCM 14847 / LMG 12228 / 1C / PRS 101 / PAO1).